A 150-amino-acid polypeptide reads, in one-letter code: SsrA-binding protein (150 aa).

The disordered stretch occupies residues 129-150 (KRQTLKSKEADREMARALRDRH).

This sequence belongs to the SmpB family.

Its subcellular location is the cytoplasm. Functionally, required for rescue of stalled ribosomes mediated by trans-translation. Binds to transfer-messenger RNA (tmRNA), required for stable association of tmRNA with ribosomes. tmRNA and SmpB together mimic tRNA shape, replacing the anticodon stem-loop with SmpB. tmRNA is encoded by the ssrA gene; the 2 termini fold to resemble tRNA(Ala) and it encodes a 'tag peptide', a short internal open reading frame. During trans-translation Ala-aminoacylated tmRNA acts like a tRNA, entering the A-site of stalled ribosomes, displacing the stalled mRNA. The ribosome then switches to translate the ORF on the tmRNA; the nascent peptide is terminated with the 'tag peptide' encoded by the tmRNA and targeted for degradation. The ribosome is freed to recommence translation, which seems to be the essential function of trans-translation. This chain is SsrA-binding protein, found in Syntrophotalea carbinolica (strain DSM 2380 / NBRC 103641 / GraBd1) (Pelobacter carbinolicus).